We begin with the raw amino-acid sequence, 765 residues long: Probable ATP-dependent RNA helicase DDX27 (765 aa).

A phosphoserine mark is found at serine 23, serine 25, and serine 48. Residues 43–63 show a composition bias toward acidic residues; sequence LGKNRSADFNPDFVFTEKEGT. Disordered stretches follow at residues 43 to 83 and 111 to 179; these read LGKN…KRAA and KEKE…FFED. The Required for interaction with the PEBOW complex signature appears at 55–57; that stretch reads FVF. Positions 129-156 are enriched in basic and acidic residues; the sequence is ENDEEGSEDEASETDYSSADENILTKAD. Residues serine 135 and serine 146 each carry the phosphoserine modification. Over residues 157-172 the composition is skewed to acidic residues; the sequence is TLKVKDRKKKKKKGQE. The Nuclear localization signal signature appears at 164-169; sequence KKKKKK. A Q motif motif is present at residues 187–215; the sequence is LSFQDMNLSRPLLKAITAMGFKQPTPIQK. Positions 218 to 392 constitute a Helicase ATP-binding domain; that stretch reads IPVGLLGKDI…SVSLKNPVRI (175 aa). Position 231-238 (231-238) interacts with ATP; it reads AATGTGKT. The DEAD box motif lies at 340 to 343; it reads DEAD. A Helicase C-terminal domain is found at 426–572; that stretch reads LLTRTFTDHV…DVILKFRDKI (147 aa). The segment covering 716–725 has biased composition (basic residues); that stretch reads VFDEELTNTS.

The protein belongs to the DEAD box helicase family. DDX27/DRS1 subfamily. Associates with PeBoW complex, composed of BOP1, PES1 and WDR12. Interacts directly with BOP1 and PES1.

It is found in the nucleus. The protein resides in the nucleolus. It localises to the chromosome. It catalyses the reaction ATP + H2O = ADP + phosphate + H(+). Its function is as follows. Probable ATP-dependent RNA helicase. Component of the nucleolar ribosomal RNA (rRNA) processing machinery that regulates 3' end formation of ribosomal 47S rRNA. The sequence is that of Probable ATP-dependent RNA helicase DDX27 (DDX27) from Homo sapiens (Human).